The following is a 740-amino-acid chain: MAPSFDTLSEQDLHEEEEEEIDFSDLKAQYEVKLEEGLDTFVVIDGLPVVPEESRQKLIKFLLRKLNTVGHTSEDAVFMPLNDKNMSEGYAFVEFETPEQAVAAVKQLHGTPLDKKHTLLVNKLMDIERYGREGRIDEEYKPPAIEPFKEKEHLRSWLADPNARDQFALYRGDKVGVFWNNKNHPPENVVDRAHWTQLFVQWSPKGTYLASVHPQGVQLWGGPAFSKQKQFPHPFVQLIEFSPGESYLTTWSARPIQVEEGQSILTYEEEGKNIIVWDIATGKPLRSFVSHDLTAGPAGDAEPKKKVQWPAFKWSADEKYVARMLQHQSISIYELPRMNLLGKTSVKIDGVMDFEWSPATVTREGVKQYEQLLCFWTPEIGSSPARVAMMSVPSKEIVRTRNLFNVSDVKLHWQSQGLYVCVKVDRHSKSKKSMATNLEIFRVREKGVPVEVVDSLKDTVINFAWEPNGNRFVLITTGEAVAGAAVAPKTAVSFFAPEKKGGAIGNFKLIRTIEKKNSNAIYWSPKGRFVVVATVHSQTSFDMDFWDMDFEGEKPEAEKDFAANLQLMKTTEHYGVTDIDWDPTGRYVVSSASVWTHQLENGWNLHTFAGQTLSENPTDKFKQFLWRPRPPTLLSKEEQKQVRKNLREYSKEFDEEDRYAVDIANTAVVEKRKRVLNEWIAWIRREKELLAEEKDAYGLPEEADDPKLAKDAAATTQEQGETVVEEIVEEIIEESEEVIG.

A compositionally biased stretch (polar residues) spans 1-10 (MAPSFDTLSE). The segment at 1 to 20 (MAPSFDTLSEQDLHEEEEEE) is disordered. Residues 40–126 (TFVVIDGLPV…HTLLVNKLMD (87 aa)) form the RRM domain. WD repeat units lie at residues 193–230 (AHWT…KQKQ), 232–289 (PHPF…RSFV), 302–343 (EPKK…LLGK), 455–496 (SLKD…SFFA), 513–556 (IEKK…EKPE), and 571–609 (TEHY…HTFA). A disordered region spans residues 696 to 721 (AYGLPEEADDPKLAKDAAATTQEQGE).

The protein belongs to the eIF-3 subunit B family. Component of the eukaryotic translation initiation factor 3 (eIF-3) complex.

It is found in the cytoplasm. Functionally, RNA-binding component of the eukaryotic translation initiation factor 3 (eIF-3) complex, which is involved in protein synthesis of a specialized repertoire of mRNAs and, together with other initiation factors, stimulates binding of mRNA and methionyl-tRNAi to the 40S ribosome. The eIF-3 complex specifically targets and initiates translation of a subset of mRNAs involved in cell proliferation. In Aspergillus fumigatus (strain ATCC MYA-4609 / CBS 101355 / FGSC A1100 / Af293) (Neosartorya fumigata), this protein is Eukaryotic translation initiation factor 3 subunit B (prt1).